A 331-amino-acid polypeptide reads, in one-letter code: Pectinesterase (331 aa).

A signal peptide spans 1–17 (MVKSILASVLFAATALA). Residue Gln138 coordinates substrate. The active-site Proton donor is Asp161. Residue Asp182 is the Nucleophile of the active site. Residues Arg247 and Trp249 each contribute to the substrate site.

Belongs to the pectinesterase family.

It is found in the secreted. It carries out the reaction [(1-&gt;4)-alpha-D-galacturonosyl methyl ester](n) + n H2O = [(1-&gt;4)-alpha-D-galacturonosyl](n) + n methanol + n H(+). It functions in the pathway glycan metabolism; pectin degradation; 2-dehydro-3-deoxy-D-gluconate from pectin: step 1/5. Involved in maceration and soft-rotting of plant tissue. In Aspergillus niger, this protein is Pectinesterase (pme1).